Reading from the N-terminus, the 469-residue chain is Protein apterous (469 aa).

Disordered regions lie at residues 21 to 44 (GPGA…CGSA) and 111 to 141 (EVSD…DSKI). 2 consecutive LIM zinc-binding domains span residues 148–200 (CSGC…CKND) and 210–263 (CSRC…CRTH). A DNA-binding region (homeobox) is located at residues 367 to 426 (TKRMRTSFKHHQLRTMKSYFAINHNPDAKDLKQLSQKTGLPKRVLQVWFQNARAKWRRMM).

Expressed in PNS and CNS.

The protein resides in the nucleus. Functionally, required for the normal development of the wing and halter imaginal disks. The sequence is that of Protein apterous (ap) from Drosophila melanogaster (Fruit fly).